A 312-amino-acid chain; its full sequence is DNA primase small subunit PriS (312 aa).

Residues aspartate 88, aspartate 90, and aspartate 215 contribute to the active site.

This sequence belongs to the eukaryotic-type primase small subunit family. In terms of assembly, heterodimer of a small subunit (PriS) and a large subunit (PriL). Mg(2+) serves as cofactor. It depends on Mn(2+) as a cofactor.

In terms of biological role, catalytic subunit of DNA primase, an RNA polymerase that catalyzes the synthesis of short RNA molecules used as primers for DNA polymerase during DNA replication. The small subunit contains the primase catalytic core and has DNA synthesis activity on its own. Binding to the large subunit stabilizes and modulates the activity, increasing the rate of DNA synthesis while decreasing the length of the DNA fragments, and conferring RNA synthesis capability. The DNA polymerase activity may enable DNA primase to also catalyze primer extension after primer synthesis. May also play a role in DNA repair. The chain is DNA primase small subunit PriS from Pyrobaculum islandicum (strain DSM 4184 / JCM 9189 / GEO3).